The following is a 130-amino-acid chain: MGYGWALFSVALVSAAQLLLKWVMMHLPPLGALRLWLDPAYAEPLALLMGGLLAYVCSMGCWFMALRRLPLNKAYPLLSLSYVLVAACALMIPEFNERFTFSRLMGVALICGGLLLICLPAGGKGDTPRR.

The Cytoplasmic portion of the chain corresponds to Met1–Gly4. A helical transmembrane segment spans residues Trp5–Met25. Residues His26–Pro44 are Periplasmic-facing. The chain crosses the membrane as a helical span at residues Leu45 to Ala65. Topologically, residues Leu66–Ala74 are cytoplasmic. The helical transmembrane segment at Tyr75 to Phe95 threads the bilayer. Residues Asn96–Arg103 are Periplasmic-facing. A helical membrane pass occupies residues Leu104–Lys124. The Cytoplasmic portion of the chain corresponds to Gly125–Arg130.

It belongs to the ArnF family. In terms of assembly, heterodimer of ArnE and ArnF.

The protein resides in the cell inner membrane. The protein operates within bacterial outer membrane biogenesis; lipopolysaccharide biosynthesis. Its function is as follows. Translocates 4-amino-4-deoxy-L-arabinose-phosphoundecaprenol (alpha-L-Ara4N-phosphoundecaprenol) from the cytoplasmic to the periplasmic side of the inner membrane. This Sodalis glossinidius (strain morsitans) protein is Probable 4-amino-4-deoxy-L-arabinose-phosphoundecaprenol flippase subunit ArnF.